We begin with the raw amino-acid sequence, 282 residues long: Bifunctional protein FolD (282 aa).

Residues 165 to 167 (NRS), S190, and I231 contribute to the NADP(+) site.

Belongs to the tetrahydrofolate dehydrogenase/cyclohydrolase family. As to quaternary structure, homodimer.

It carries out the reaction (6R)-5,10-methylene-5,6,7,8-tetrahydrofolate + NADP(+) = (6R)-5,10-methenyltetrahydrofolate + NADPH. The enzyme catalyses (6R)-5,10-methenyltetrahydrofolate + H2O = (6R)-10-formyltetrahydrofolate + H(+). It functions in the pathway one-carbon metabolism; tetrahydrofolate interconversion. In terms of biological role, catalyzes the oxidation of 5,10-methylenetetrahydrofolate to 5,10-methenyltetrahydrofolate and then the hydrolysis of 5,10-methenyltetrahydrofolate to 10-formyltetrahydrofolate. In Clostridium botulinum (strain Langeland / NCTC 10281 / Type F), this protein is Bifunctional protein FolD.